Here is a 458-residue protein sequence, read N- to C-terminus: tRNA modification GTPase MnmE (458 aa).

Residues arginine 26, glutamate 88, and arginine 127 each contribute to the (6S)-5-formyl-5,6,7,8-tetrahydrofolate site. The TrmE-type G domain maps to 224 to 378 (GLSTAIIGRP…IEDRINQLFF (155 aa)). A K(+)-binding site is contributed by asparagine 234. Residues 234–239 (NVGKSS), 253–259 (TDIAGTT), and 278–281 (DTAG) each bind GTP. Position 238 (serine 238) interacts with Mg(2+). Residues threonine 253, isoleucine 255, and threonine 258 each contribute to the K(+) site. Residue threonine 259 coordinates Mg(2+). Residue lysine 458 coordinates (6S)-5-formyl-5,6,7,8-tetrahydrofolate.

The protein belongs to the TRAFAC class TrmE-Era-EngA-EngB-Septin-like GTPase superfamily. TrmE GTPase family. Homodimer. Heterotetramer of two MnmE and two MnmG subunits. The cofactor is K(+).

The protein resides in the cytoplasm. Exhibits a very high intrinsic GTPase hydrolysis rate. Involved in the addition of a carboxymethylaminomethyl (cmnm) group at the wobble position (U34) of certain tRNAs, forming tRNA-cmnm(5)s(2)U34. This chain is tRNA modification GTPase MnmE, found in Streptococcus pyogenes serotype M3 (strain ATCC BAA-595 / MGAS315).